Reading from the N-terminus, the 387-residue chain is MKNVVIVDCLRTPMGRSKGGAFRHTRAEDLSAHLMKGILARNPQVNPSEIEDIYWGCVQQTLEQGFNVARNAALLAGLPIEIGAVTVNRLCGSSMQALHDGARAIMTGDAEICLIGGVEHMGHVPMNHGVDFHPGMSKHVAKAAGMMGLTAEMLGKLHGISREQQDEFAARSHARAHAATLEGRFKNEILPTEGHAADGTLFTLDHDEVIRPETTVEGLSQLRPVFDPANGTVTAGTSSALSDGASAMLIMSEEKANELGVTIRARIKGMAIAGCDPSIMGYGPVPATQKALKRAGLSIEDMDVIELNEAFAAQSLPCAKDLGLLDVMDEKVNLNGGAIALGHPLGCSGARISTTLINLMEAKDAKYGLATMCIGLGQGIATVFERP.

The Acyl-thioester intermediate role is filled by cysteine 91. Active-site proton acceptor residues include histidine 343 and cysteine 373.

The protein belongs to the thiolase-like superfamily. Thiolase family. In terms of assembly, heterotetramer of two alpha chains (FadB) and two beta chains (FadA).

The protein localises to the cytoplasm. The enzyme catalyses an acyl-CoA + acetyl-CoA = a 3-oxoacyl-CoA + CoA. The protein operates within lipid metabolism; fatty acid beta-oxidation. Functionally, catalyzes the final step of fatty acid oxidation in which acetyl-CoA is released and the CoA ester of a fatty acid two carbons shorter is formed. This chain is 3-ketoacyl-CoA thiolase, found in Vibrio vulnificus (strain YJ016).